The chain runs to 70 residues: Conotoxin Cl6.13 (70 aa).

Residues 1–21 form the signal peptide; that stretch reads MKFPLLFISLALAAFLTRVQD. A propeptide spanning residues 22 to 33 is cleaved from the precursor; sequence ADSSVISKEKSV. Cystine bridges form between Cys41/Cys58, Cys48/Cys63, and Cys57/Cys68.

As to expression, expressed by the venom duct.

It is found in the secreted. The sequence is that of Conotoxin Cl6.13 from Californiconus californicus (California cone).